A 252-amino-acid chain; its full sequence is Chlorophyll a-b binding protein P4, chloroplastic (252 aa).

Trp56 is a binding site for chlorophyll b. Chlorophyll a-binding residues include Phe76 and Glu95. Residue Arg100 coordinates chlorophyll b. Transmembrane regions (helical) follow at residues Trp101–Ile121 and Tyr134–Ile154. Residues Ser137, Val143, Glu153, and Arg156 each coordinate chlorophyll b. Residues Lys203, Glu204, Asn207, Arg209, Gln221, and His236 each contribute to the chlorophyll a site.

Belongs to the light-harvesting chlorophyll a/b-binding (LHC) protein family. In terms of assembly, the LHC complex consists of chlorophyll a-b binding proteins. Binds at least 14 chlorophylls (8 Chl-a and 6 Chl-b) and carotenoids such as lutein and neoxanthin. serves as cofactor. In terms of processing, photoregulated by reversible phosphorylation of its threonine residues.

Its subcellular location is the plastid. The protein localises to the chloroplast thylakoid membrane. Its function is as follows. The light-harvesting complex (LHC) functions as a light receptor, it captures and delivers excitation energy to photosystems with which it is closely associated. May channel protons produced in the catalytic Mn center of water oxidation into the thylakoid lumen. The chain is Chlorophyll a-b binding protein P4, chloroplastic from Pisum sativum (Garden pea).